The following is a 162-amino-acid chain: uncharacterized protein (162 aa).

3 consecutive transmembrane segments (helical) span residues 7 to 27 (LIADYGYLAIFLMLVLGIVGL), 51 to 71 (LSILISFVGALLGMLISYMIG), and 134 to 154 (TYVAFAAIGAFLWCFVFITIG).

This sequence belongs to the DedA family.

It localises to the cell membrane. This is an uncharacterized protein from Bacillus subtilis (strain 168).